The primary structure comprises 105 residues: Unclassified hydrophobin D (105 aa).

An N-terminal signal peptide occupies residues 1 to 18 (MKFYIVLLALAAFAMAEA). Cystine bridges form between Cys35/Cys86, Cys42/Cys83, and Cys43/Cys49.

Its subcellular location is the secreted. The protein resides in the cell wall. Functionally, aerial growth, conidiation, and dispersal of filamentous fungi in the environment rely upon a capability of their secreting small amphipathic proteins called hydrophobins (HPBs) with low sequence identity. Class I can self-assemble into an outermost layer of rodlet bundles on aerial cell surfaces, conferring cellular hydrophobicity that supports fungal growth, development and dispersal; whereas Class II form highly ordered films at water-air interfaces through intermolecular interactions but contribute nothing to the rodlet structure. In P.expansum, hydrophobins contribute to germination, tolerance to cold stress and mycotoxins patulin and citrinin production. The chain is Unclassified hydrophobin D from Penicillium expansum (Blue mold rot fungus).